The primary structure comprises 657 residues: 1-deoxy-D-xylulose-5-phosphate synthase (657 aa).

Residues histidine 73 and 113–115 (SHA) contribute to the thiamine diphosphate site. Aspartate 145 is a Mg(2+) binding site. Residues 146 to 147 (GA), asparagine 175, tyrosine 293, and glutamate 375 contribute to the thiamine diphosphate site. Asparagine 175 is a binding site for Mg(2+).

Belongs to the transketolase family. DXPS subfamily. In terms of assembly, homodimer. Mg(2+) serves as cofactor. Requires thiamine diphosphate as cofactor.

The enzyme catalyses D-glyceraldehyde 3-phosphate + pyruvate + H(+) = 1-deoxy-D-xylulose 5-phosphate + CO2. It functions in the pathway metabolic intermediate biosynthesis; 1-deoxy-D-xylulose 5-phosphate biosynthesis; 1-deoxy-D-xylulose 5-phosphate from D-glyceraldehyde 3-phosphate and pyruvate: step 1/1. Catalyzes the acyloin condensation reaction between C atoms 2 and 3 of pyruvate and glyceraldehyde 3-phosphate to yield 1-deoxy-D-xylulose-5-phosphate (DXP). This chain is 1-deoxy-D-xylulose-5-phosphate synthase, found in Paenarthrobacter aurescens (strain TC1).